A 2280-amino-acid polypeptide reads, in one-letter code: Acetyl-CoA carboxylase (2280 aa).

One can recognise a Biotin carboxylation domain in the interval 68 to 577 (VITSILIANN…TTGWLDRLIA (510 aa)). In terms of domain architecture, ATP-grasp spans 226 to 418 (ETNIVTVDDD…LPAAQLQVAM (193 aa)). 266–271 (GGGGKG) is an ATP binding site. Mn(2+) is bound by residues E375, E389, and N391. R393 is an active-site residue. Residues 704–778 (LEQENDPTQL…DAGDILGILT (75 aa)) form the Biotinyl-binding domain. An N6-biotinyllysine modification is found at K745. Phosphoserine occurs at positions 1179 and 1181. The CoA carboxyltransferase N-terminal domain maps to 1524–1863 (PYPTKEWLQP…KRNNPVPISP (340 aa)). Positions 1524–2181 (PYPTKEWLQP…EHYALQKITQ (658 aa)) are carboxyltransferase. Residues R1772, K2074, and R2076 each coordinate CoA. One can recognise a CoA carboxyltransferase C-terminal domain in the interval 1867–2181 (TWDRDVEFYP…EHYALQKITQ (315 aa)).

As to quaternary structure, interacts with sad1. The cofactor is biotin. Requires Mn(2+) as cofactor.

It localises to the cytoplasm. It carries out the reaction hydrogencarbonate + acetyl-CoA + ATP = malonyl-CoA + ADP + phosphate + H(+). It catalyses the reaction N(6)-biotinyl-L-lysyl-[protein] + hydrogencarbonate + ATP = N(6)-carboxybiotinyl-L-lysyl-[protein] + ADP + phosphate + H(+). It functions in the pathway lipid metabolism; malonyl-CoA biosynthesis; malonyl-CoA from acetyl-CoA: step 1/1. By phosphorylation. Carries out three functions: biotin carboxyl carrier protein, biotin carboxylase and carboxyltransferase. This Schizosaccharomyces pombe (strain 972 / ATCC 24843) (Fission yeast) protein is Acetyl-CoA carboxylase (cut6).